A 236-amino-acid polypeptide reads, in one-letter code: Increased recombination centers protein 22-2 (236 aa).

Residues 1 to 19 form the signal peptide; sequence MKFSAILTALTATIATVAG. Residues 20–161 are Lumenal-facing; that stretch reads YETSGKPHTV…AAVSFFDPRL (142 aa). Residues 162–182 form a helical membrane-spanning segment; it reads IFLELVLLATFGGIAYFVYEI. The Cytoplasmic portion of the chain corresponds to 183–236; the sequence is WGKQYLRGTAPVKVPVKKSGSPVAVKEASPVGSASGFDESWIPEAHLKKNKKKA.

Belongs to the IRC22 family.

The protein resides in the endoplasmic reticulum membrane. Functionally, is probably involved in a pathway contributing to genomic integrity. This chain is Increased recombination centers protein 22-2 (IRC22-2), found in Candida tropicalis (strain ATCC MYA-3404 / T1) (Yeast).